The primary structure comprises 374 residues: Chaperone protein DnaJ (374 aa).

Residues 5-70 enclose the J domain; that stretch reads DYYEVLGVER…SKRAAFDQYG (66 aa). A CR-type zinc finger spans residues 133–211; it reads GTTVSIRVPT…CHGEGRVEEY (79 aa). Zn(2+) contacts are provided by Cys146, Cys149, Cys163, Cys166, Cys185, Cys188, Cys199, and Cys202. CXXCXGXG motif repeat units follow at residues 146 to 153, 163 to 170, 185 to 192, and 199 to 206; these read CQPCDGSG, CPTCGGIG, CPRCHGQG, and CTSCHGEG.

This sequence belongs to the DnaJ family. As to quaternary structure, homodimer. Zn(2+) is required as a cofactor.

Its subcellular location is the cytoplasm. Participates actively in the response to hyperosmotic and heat shock by preventing the aggregation of stress-denatured proteins and by disaggregating proteins, also in an autonomous, DnaK-independent fashion. Unfolded proteins bind initially to DnaJ; upon interaction with the DnaJ-bound protein, DnaK hydrolyzes its bound ATP, resulting in the formation of a stable complex. GrpE releases ADP from DnaK; ATP binding to DnaK triggers the release of the substrate protein, thus completing the reaction cycle. Several rounds of ATP-dependent interactions between DnaJ, DnaK and GrpE are required for fully efficient folding. Also involved, together with DnaK and GrpE, in the DNA replication of plasmids through activation of initiation proteins. The sequence is that of Chaperone protein DnaJ from Pseudomonas putida (strain GB-1).